The following is a 151-amino-acid chain: Cytochrome c-type biogenesis protein CcmE (151 aa).

At 1–8 (MNPLRRKR) the chain is on the cytoplasmic side. Residues 9–29 (LLIILAILVGVGIAVGLALSA) form a helical; Signal-anchor for type II membrane protein membrane-spanning segment. Residues 30 to 151 (LQQNINLFYT…QSAPTPAKEG (122 aa)) lie on the Periplasmic side of the membrane. Heme contacts are provided by His124 and Tyr128.

This sequence belongs to the CcmE/CycJ family.

Its subcellular location is the cell inner membrane. Its function is as follows. Heme chaperone required for the biogenesis of c-type cytochromes. Transiently binds heme delivered by CcmC and transfers the heme to apo-cytochromes in a process facilitated by CcmF and CcmH. This chain is Cytochrome c-type biogenesis protein CcmE, found in Pseudomonas fluorescens (strain SBW25).